The chain runs to 151 residues: UPF0208 membrane protein YfbV (151 aa).

Transmembrane regions (helical) follow at residues 46–65 and 69–91; these read YAIRFMPPIAVFTLCWQIAL and LGPAVATALFALSLPMQGLWWLG.

The protein belongs to the UPF0208 family.

It is found in the cell inner membrane. The chain is UPF0208 membrane protein YfbV from Shigella flexneri serotype 5b (strain 8401).